Consider the following 298-residue polypeptide: MTQTVPYRCGRIAVIGRPNVGKSTLTNALVGTKISIVSNRPQTTRHRLLGIATFPEGQIVLVDTPGLHREQKHPMNRLMNRTARGSLEDVDAALLVTESTHWNEEDTLAYNLLNDTGIPVVLVINKIDRFKDKSALLPLLTHINENHTFATIHPVSALKRKGLETLVSDLLALLPEGDPMFSEDEITDRSQRFLASELVREQVMRQLGEELPYATTVEIEYFTENTGLFRIGALIWVERESQKAIVIGKGGARLKEIGVKARQQMERLFQTKVFLETWVRVRKDWSNNEAALKTFGYE.

The 169-residue stretch at 8–176 (RCGRIAVIGR…VSDLLALLPE (169 aa)) folds into the Era-type G domain. The tract at residues 16-23 (GRPNVGKS) is G1. 16–23 (GRPNVGKS) provides a ligand contact to GTP. Positions 42–46 (QTTRH) are G2. Residues 63–66 (DTPG) form a G3 region. Residues 63–67 (DTPGL) and 125–128 (NKID) each bind GTP. The G4 stretch occupies residues 125-128 (NKID). The interval 155–157 (VSA) is G5. In terms of domain architecture, KH type-2 spans 199 to 283 (VREQVMRQLG…FLETWVRVRK (85 aa)).

It belongs to the TRAFAC class TrmE-Era-EngA-EngB-Septin-like GTPase superfamily. Era GTPase family. In terms of assembly, monomer.

Its subcellular location is the cytoplasm. It localises to the cell inner membrane. An essential GTPase that binds both GDP and GTP, with rapid nucleotide exchange. Plays a role in 16S rRNA processing and 30S ribosomal subunit biogenesis and possibly also in cell cycle regulation and energy metabolism. The sequence is that of GTPase Era from Xylella fastidiosa (strain M12).